The following is a 1241-amino-acid chain: DNA-directed RNA polymerase subunit beta (1241 aa).

This sequence belongs to the RNA polymerase beta chain family. As to quaternary structure, the RNAP catalytic core consists of 2 alpha, 1 beta, 1 beta' and 1 omega subunit. When a sigma factor is associated with the core the holoenzyme is formed, which can initiate transcription.

The enzyme catalyses RNA(n) + a ribonucleoside 5'-triphosphate = RNA(n+1) + diphosphate. Functionally, DNA-dependent RNA polymerase catalyzes the transcription of DNA into RNA using the four ribonucleoside triphosphates as substrates. The protein is DNA-directed RNA polymerase subunit beta of Clostridium botulinum (strain Alaska E43 / Type E3).